Reading from the N-terminus, the 377-residue chain is Glutamate 5-kinase (377 aa).

K22 is an ATP binding site. S62, D149, and N161 together coordinate substrate. Residues 181 to 182 and 223 to 229 contribute to the ATP site; these read TD and TGGMVTK. Positions 285 to 363 constitute a PUA domain; that stretch reads RGTIVVDAGA…AQLKRFLGPQ (79 aa).

This sequence belongs to the glutamate 5-kinase family.

The protein localises to the cytoplasm. It carries out the reaction L-glutamate + ATP = L-glutamyl 5-phosphate + ADP. The protein operates within amino-acid biosynthesis; L-proline biosynthesis; L-glutamate 5-semialdehyde from L-glutamate: step 1/2. Its function is as follows. Catalyzes the transfer of a phosphate group to glutamate to form L-glutamate 5-phosphate. The polypeptide is Glutamate 5-kinase (Bifidobacterium longum (strain DJO10A)).